The following is a 163-amino-acid chain: NADH-quinone oxidoreductase subunit I (163 aa).

4Fe-4S ferredoxin-type domains lie at 54–84 (LRRY…IESE) and 94–123 (TRYD…ETRI). Residues Cys-64, Cys-67, Cys-70, Cys-74, Cys-103, Cys-106, Cys-109, and Cys-113 each coordinate [4Fe-4S] cluster.

Belongs to the complex I 23 kDa subunit family. NDH-1 is composed of 14 different subunits. Subunits NuoA, H, J, K, L, M, N constitute the membrane sector of the complex. [4Fe-4S] cluster serves as cofactor.

The protein resides in the cell inner membrane. It carries out the reaction a quinone + NADH + 5 H(+)(in) = a quinol + NAD(+) + 4 H(+)(out). In terms of biological role, NDH-1 shuttles electrons from NADH, via FMN and iron-sulfur (Fe-S) centers, to quinones in the respiratory chain. The immediate electron acceptor for the enzyme in this species is believed to be ubiquinone. Couples the redox reaction to proton translocation (for every two electrons transferred, four hydrogen ions are translocated across the cytoplasmic membrane), and thus conserves the redox energy in a proton gradient. The chain is NADH-quinone oxidoreductase subunit I from Methylobacillus flagellatus (strain ATCC 51484 / DSM 6875 / VKM B-1610 / KT).